A 307-amino-acid polypeptide reads, in one-letter code: Oxygen-dependent coproporphyrinogen-III oxidase (307 aa).

Ser-94 lines the substrate pocket. A divalent metal cation contacts are provided by His-98 and His-108. The active-site Proton donor is the His-108. 110-112 contributes to the substrate binding site; that stretch reads NVR. 2 residues coordinate a divalent metal cation: His-147 and His-177. Residues 242-277 are important for dimerization; that stretch reads YVEFNLVWDRGTLFGLQSGGRTESILMSMPPLAQWQ. 260 to 262 provides a ligand contact to substrate; that stretch reads GGR.

The protein belongs to the aerobic coproporphyrinogen-III oxidase family. Homodimer. The cofactor is a divalent metal cation.

It localises to the cytoplasm. It carries out the reaction coproporphyrinogen III + O2 + 2 H(+) = protoporphyrinogen IX + 2 CO2 + 2 H2O. It participates in porphyrin-containing compound metabolism; protoporphyrin-IX biosynthesis; protoporphyrinogen-IX from coproporphyrinogen-III (O2 route): step 1/1. Involved in the heme biosynthesis. Catalyzes the aerobic oxidative decarboxylation of propionate groups of rings A and B of coproporphyrinogen-III to yield the vinyl groups in protoporphyrinogen-IX. In Chromohalobacter salexigens (strain ATCC BAA-138 / DSM 3043 / CIP 106854 / NCIMB 13768 / 1H11), this protein is Oxygen-dependent coproporphyrinogen-III oxidase.